Consider the following 187-residue polypeptide: Epididymal-specific lipocalin-10 (187 aa).

Residues 1–19 (MRQGLLVLALVLVLVLVLA) form the signal peptide. A disulfide bridge links C90 with C163. A glycan (N-linked (GlcNAc...) asparagine) is linked at N149. The residue at position 170 (K170) is an N6-acetyllysine.

This sequence belongs to the calycin superfamily. Lipocalin family.

The protein resides in the secreted. In terms of biological role, may play a role in male fertility. May act as a retinoid carrier protein within the epididymis. This is Epididymal-specific lipocalin-10 (LCN10) from Homo sapiens (Human).